The chain runs to 471 residues: UDP-N-acetylmuramate--L-alanine ligase (471 aa).

Position 114-120 (114-120) interacts with ATP; that stretch reads GTHGKTT.

It belongs to the MurCDEF family.

The protein localises to the cytoplasm. It carries out the reaction UDP-N-acetyl-alpha-D-muramate + L-alanine + ATP = UDP-N-acetyl-alpha-D-muramoyl-L-alanine + ADP + phosphate + H(+). The protein operates within cell wall biogenesis; peptidoglycan biosynthesis. In terms of biological role, cell wall formation. In Agrobacterium fabrum (strain C58 / ATCC 33970) (Agrobacterium tumefaciens (strain C58)), this protein is UDP-N-acetylmuramate--L-alanine ligase.